The primary structure comprises 107 residues: Iron-sulfur cluster assembly protein CyaY (107 aa).

The protein belongs to the frataxin family.

Functionally, involved in iron-sulfur (Fe-S) cluster assembly. May act as a regulator of Fe-S biogenesis. This Yersinia intermedia protein is Iron-sulfur cluster assembly protein CyaY.